The primary structure comprises 380 residues: Glutamate 5-kinase (380 aa).

K15 contributes to the ATP binding site. 3 residues coordinate substrate: S59, D146, and N158. ATP is bound at residue 178-179 (TD). The region spanning 285–363 (RGSVTVDAGA…AEFERLLGYA (79 aa)) is the PUA domain.

The protein belongs to the glutamate 5-kinase family.

The protein resides in the cytoplasm. It catalyses the reaction L-glutamate + ATP = L-glutamyl 5-phosphate + ADP. It participates in amino-acid biosynthesis; L-proline biosynthesis; L-glutamate 5-semialdehyde from L-glutamate: step 1/2. Its function is as follows. Catalyzes the transfer of a phosphate group to glutamate to form L-glutamate 5-phosphate. This is Glutamate 5-kinase from Acidovorax ebreus (strain TPSY) (Diaphorobacter sp. (strain TPSY)).